A 298-amino-acid chain; its full sequence is Mitochondrial dicarboxylate transporter (298 aa).

Solcar repeat units lie at residues 11-95, 103-195, and 205-289; these read KNIK…LKEN, TNMA…FKNY, and SKNY…LKKH. Helical transmembrane passes span 17–37, 58–76, 105–126, 170–189, 211–231, and 265–283; these read WWYG…LDLA, ILAN…AAVL, MAYL…GNFA, GWKP…VVTY, LTAS…ADVM, and WLPS…FFAI.

The protein belongs to the mitochondrial carrier (TC 2.A.29) family. As to quaternary structure, homodimer. Binds to the TIM22 translocation complex during import.

It is found in the mitochondrion inner membrane. Functionally, mitochondrial dicarboxylic transporter catalyzing the exchange of dicarboxylic acids like malate and succinate for inorganic phosphate. Required for growth on ethanol and acetate. The protein is Mitochondrial dicarboxylate transporter (DIC1) of Saccharomyces cerevisiae (strain ATCC 204508 / S288c) (Baker's yeast).